A 111-amino-acid chain; its full sequence is MSTAELACSYAALILADDGVEITADKIQTLLGAAKVADVEPIWTSLFAKALEGKDIKDLLTNVGSGGAAAPAAVGGAAAGAAAPAEAAAAEEKKEEEKEESDEDMGFGLFD.

A disordered region spans residues 84-111; sequence PAEAAAAEEKKEEEKEESDEDMGFGLFD.

The protein belongs to the eukaryotic ribosomal protein P1/P2 family. As to quaternary structure, P1 and P2 exist as dimers at the large ribosomal subunit. Phosphorylated.

Functionally, plays an important role in the elongation step of protein synthesis. The protein is Large ribosomal subunit protein P1 of Aspergillus fumigatus (strain ATCC MYA-4609 / CBS 101355 / FGSC A1100 / Af293) (Neosartorya fumigata).